Consider the following 634-residue polypeptide: Threonine--tRNA ligase (634 aa).

One can recognise a TGS domain in the interval 1–61 (MINITLPDGS…DHDASLRIIT (61 aa)). The tract at residues 243-534 (DHRRIGKAQD…LIEHHAGAFP (292 aa)) is catalytic. 3 residues coordinate Zn(2+): Cys334, His385, and His511.

Belongs to the class-II aminoacyl-tRNA synthetase family. As to quaternary structure, homodimer. Zn(2+) is required as a cofactor.

The protein resides in the cytoplasm. The enzyme catalyses tRNA(Thr) + L-threonine + ATP = L-threonyl-tRNA(Thr) + AMP + diphosphate + H(+). Functionally, catalyzes the attachment of threonine to tRNA(Thr) in a two-step reaction: L-threonine is first activated by ATP to form Thr-AMP and then transferred to the acceptor end of tRNA(Thr). Also edits incorrectly charged L-seryl-tRNA(Thr). This Xanthomonas euvesicatoria pv. vesicatoria (strain 85-10) (Xanthomonas campestris pv. vesicatoria) protein is Threonine--tRNA ligase.